The following is an 870-amino-acid chain: Leucine--tRNA ligase (870 aa).

The 'HIGH' region motif lies at P36–H46. Residues K602–S606 carry the 'KMSKS' region motif. Position 605 (K605) interacts with ATP.

The protein belongs to the class-I aminoacyl-tRNA synthetase family.

The protein resides in the cytoplasm. It carries out the reaction tRNA(Leu) + L-leucine + ATP = L-leucyl-tRNA(Leu) + AMP + diphosphate. The chain is Leucine--tRNA ligase from Rickettsia akari (strain Hartford).